The chain runs to 79 residues: MENLSMDLLYMAAAIMMGLAAIGAAIGIGILGGKFLEGAARQPDLIPLLRTQFFIVMGLVDAIPMIAVGLGLYVMFAVA.

Transmembrane regions (helical) follow at residues 11–31 (MAAAIMMGLAAIGAAIGIGIL) and 53–73 (FFIVMGLVDAIPMIAVGLGLY).

This sequence belongs to the ATPase C chain family. In terms of assembly, F-type ATPases have 2 components, F(1) - the catalytic core - and F(0) - the membrane proton channel. F(1) has five subunits: alpha(3), beta(3), gamma(1), delta(1), epsilon(1). F(0) has three main subunits: a(1), b(2) and c(10-14). The alpha and beta chains form an alternating ring which encloses part of the gamma chain. F(1) is attached to F(0) by a central stalk formed by the gamma and epsilon chains, while a peripheral stalk is formed by the delta and b chains.

The protein localises to the cell inner membrane. Functionally, f(1)F(0) ATP synthase produces ATP from ADP in the presence of a proton or sodium gradient. F-type ATPases consist of two structural domains, F(1) containing the extramembraneous catalytic core and F(0) containing the membrane proton channel, linked together by a central stalk and a peripheral stalk. During catalysis, ATP synthesis in the catalytic domain of F(1) is coupled via a rotary mechanism of the central stalk subunits to proton translocation. In terms of biological role, key component of the F(0) channel; it plays a direct role in translocation across the membrane. A homomeric c-ring of between 10-14 subunits forms the central stalk rotor element with the F(1) delta and epsilon subunits. This is ATP synthase subunit c from Proteus mirabilis (strain HI4320).